We begin with the raw amino-acid sequence, 81 residues long: Photosystem I iron-sulfur center (81 aa).

4Fe-4S ferredoxin-type domains follow at residues 2-31 (SHAV…MVPW) and 39-68 (IAAS…IRVY). 8 residues coordinate [4Fe-4S] cluster: C11, C14, C17, C21, C48, C51, C54, and C58.

In terms of assembly, the cyanobacterial PSI reaction center is composed of one copy each of PsaA,B,C,D,E,F,I,J,K,L,M and X, and forms trimeric complexes. [4Fe-4S] cluster serves as cofactor.

The protein localises to the cellular thylakoid membrane. The enzyme catalyses reduced [plastocyanin] + hnu + oxidized [2Fe-2S]-[ferredoxin] = oxidized [plastocyanin] + reduced [2Fe-2S]-[ferredoxin]. Its function is as follows. Apoprotein for the two 4Fe-4S centers FA and FB of photosystem I (PSI); essential for photochemical activity. FB is the terminal electron acceptor of PSI, donating electrons to ferredoxin. The C-terminus interacts with PsaA/B/D and helps assemble the protein into the PSI complex. Required for binding of PsaD and PsaE to PSI. PSI is a plastocyanin/cytochrome c6-ferredoxin oxidoreductase, converting photonic excitation into a charge separation, which transfers an electron from the donor P700 chlorophyll pair to the spectroscopically characterized acceptors A0, A1, FX, FA and FB in turn. This chain is Photosystem I iron-sulfur center, found in Prochlorococcus marinus (strain MIT 9303).